The sequence spans 85 residues: MAHKKGVGSSRNGRDSDGQRLGCKKFGGEHVKAGNIIYRQHGTKIHPGNNVGLGKDYTLFALIEGVVKFERLGRDRKKVSVYPAS.

Residues 1–24 (MAHKKGVGSSRNGRDSDGQRLGCK) are disordered.

It belongs to the bacterial ribosomal protein bL27 family.

The protein is Large ribosomal subunit protein bL27 of Geotalea daltonii (strain DSM 22248 / JCM 15807 / FRC-32) (Geobacter daltonii).